A 542-amino-acid chain; its full sequence is POTE ankyrin domain family member C (542 aa).

ANK repeat units lie at residues E138 to K171, Q172 to V201, K205 to I234, Y238 to S267, C271 to A300, Y304 to S333, and S337 to S373. Positions S369–L494 are disordered. Basic and acidic residues-rich tracts occupy residues Q377–V392, M401–D412, and E466–S481. The segment covering E482–L494 has biased composition (polar residues). A coiled-coil region spans residues S489–S538.

The protein belongs to the POTE family. Expressed in prostate and testis.

This is POTE ankyrin domain family member C (POTEC) from Homo sapiens (Human).